The chain runs to 228 residues: Cytidylate kinase (228 aa).

Residue 17-25 (GPTASGKGT) participates in ATP binding.

Belongs to the cytidylate kinase family. Type 1 subfamily.

The protein resides in the cytoplasm. It carries out the reaction CMP + ATP = CDP + ADP. The catalysed reaction is dCMP + ATP = dCDP + ADP. The sequence is that of Cytidylate kinase from Burkholderia mallei (strain NCTC 10247).